Here is a 445-residue protein sequence, read N- to C-terminus: D-serine dehydratase (445 aa).

N6-(pyridoxal phosphate)lysine is present on K118.

It belongs to the serine/threonine dehydratase family. DsdA subfamily. Monomer. It depends on pyridoxal 5'-phosphate as a cofactor.

The catalysed reaction is D-serine = pyruvate + NH4(+). This is D-serine dehydratase from Serratia proteamaculans (strain 568).